Here is a 280-residue protein sequence, read N- to C-terminus: Shikimate dehydrogenase (NADP(+)) (280 aa).

Shikimate is bound by residues 15–17 (SLS) and threonine 62. The active-site Proton acceptor is lysine 66. Positions 88 and 104 each coordinate shikimate. Residues 128–132 (GAGGA), 151–156 (NRTEER), and isoleucine 222 contribute to the NADP(+) site. Shikimate is bound at residue tyrosine 224. Glycine 245 serves as a coordination point for NADP(+).

The protein belongs to the shikimate dehydrogenase family. In terms of assembly, homodimer.

The catalysed reaction is shikimate + NADP(+) = 3-dehydroshikimate + NADPH + H(+). It functions in the pathway metabolic intermediate biosynthesis; chorismate biosynthesis; chorismate from D-erythrose 4-phosphate and phosphoenolpyruvate: step 4/7. In terms of biological role, involved in the biosynthesis of the chorismate, which leads to the biosynthesis of aromatic amino acids. Catalyzes the reversible NADPH linked reduction of 3-dehydroshikimate (DHSA) to yield shikimate (SA). The protein is Shikimate dehydrogenase (NADP(+)) of Methanosarcina acetivorans (strain ATCC 35395 / DSM 2834 / JCM 12185 / C2A).